A 59-amino-acid chain; its full sequence is MFAGLPSLSHEQQQKAVERIQELMSQGMSSGEAIAQVAGELRANHTGERIVARFEDEDE.

It belongs to the UPF0181 family.

This chain is UPF0181 protein YoaH, found in Salmonella arizonae (strain ATCC BAA-731 / CDC346-86 / RSK2980).